Consider the following 48-residue polypeptide: Cytochrome b559 subunit beta (48 aa).

The helical transmembrane segment at 23–39 (WLAVHALAIPSVFFLGA) threads the bilayer. His-27 is a binding site for heme.

It belongs to the PsbE/PsbF family. As to quaternary structure, heterodimer of an alpha subunit and a beta subunit. PSII is composed of 1 copy each of membrane proteins PsbA, PsbB, PsbC, PsbD, PsbE, PsbF, PsbH, PsbI, PsbJ, PsbK, PsbL, PsbM, PsbT, PsbX, PsbY, Psb30/Ycf12, peripheral proteins PsbO, CyanoQ (PsbQ), PsbU, PsbV and a large number of cofactors. It forms dimeric complexes. Heme b serves as cofactor.

The protein localises to the cellular thylakoid membrane. This b-type cytochrome is tightly associated with the reaction center of photosystem II (PSII). PSII is a light-driven water:plastoquinone oxidoreductase that uses light energy to abstract electrons from H(2)O, generating O(2) and a proton gradient subsequently used for ATP formation. It consists of a core antenna complex that captures photons, and an electron transfer chain that converts photonic excitation into a charge separation. In Prochlorococcus marinus (strain MIT 9515), this protein is Cytochrome b559 subunit beta.